A 263-amino-acid chain; its full sequence is Protein maestro (263 aa).

Positions 1–21 (MDQTPRRMLGQPLSSPATQPK) are disordered. The HEAT repeat unit spans residues 128 to 163 (SFFIDITLQTRTLLDDENDSLRYSAFVLFGQLADLA).

It is found in the nucleus. Its subcellular location is the nucleolus. The protein is Protein maestro (MRO) of Bos taurus (Bovine).